A 69-amino-acid polypeptide reads, in one-letter code: Large ribosomal subunit protein uL30 (69 aa).

Belongs to the universal ribosomal protein uL30 family. Part of the 50S ribosomal subunit.

The polypeptide is Large ribosomal subunit protein uL30 (Rhizobium etli (strain CIAT 652)).